Here is an 802-residue protein sequence, read N- to C-terminus: MDNRGSFFFLLIVFYLLLSSQSRPPLLDQDRERQREVARERDALRLLNESKYGDFDPPGDKWLPFAGTRKNDSYAWGILPEAQGRARHQLRSAISNAGLEPPRSLEDPDALPSLNLTQLLLPVYRNATGKLRGDWVRRKLNKEYPKLNTTAIALEHGYFTHEFGLNITGSSGTFYLDLREGGGEELRVDSGQVREIRATLAVESNDFWGNTWYISLFGVHFPETGAIILSSNSEKFEGLFVLPHLAFSSDAYELSHQLLLNSLSDTLSEKENRPPTLFPWSSLIGSEQVEFPAPKCEHIIYLQQHPVTIHDYLADKPVVDQIEEELRFPIGAPVPPAPLMVMSAVVFSPDCGYILETKGTPDFPPSEGLYLTGPKIEEYDKYSARLVFIICGVFAAQITLLLRQIKEASTPSTRSRISFYTIALMAFGDAFVLIFILLELYPAVSFLVMATAAFLTFLSVSYIGMKFMMEIWAVQAPERREQERRSNPPASTPRSTGLPLPATSAPVRDSGATPIILTPDQDPPAEEDDQPTNRGTTSAAQETRNDVGAMYARFYFVLFVMLIISIWSFLWPNRLGALYARALAFVYLSFWTPQIGRNIIRNCRKALRWDFVIGQSILRLFPFVYFLTVRGNVLFIHPDTTTAFALAGWVWIQVWVLASQDILGPRFFVPRGWAPAAYDYHPILRDGDESEADLESGGVLPIGALRAEDLSGDAKDEDKQRTKDRKRAVFDCAICMQEIEVPVLAARGSAGGSSVTEGATSILSRRTYMVTPCRHIFHSTCLESWMRLRLQCPICRESIPPV.

The signal sequence occupies residues Met1–Ser22. Over Arg23 to Lys381 the chain is Lumenal. N-linked (GlcNAc...) asparagine glycans are attached at residues Asn48, Asn71, Asn115, Asn126, Asn148, and Asn166. A helical membrane pass occupies residues Tyr382–Leu402. Residues Arg403–Asp429 are Cytoplasmic-facing. The chain crosses the membrane as a helical span at residues Ala430–Ala450. Over Thr451–Ala453 the chain is Lumenal. The chain crosses the membrane as a helical span at residues Phe454 to Val474. The Cytoplasmic portion of the chain corresponds to Gln475 to Met550. The segment at Glu478–Gln541 is disordered. Polar residues predominate over residues Thr532–Gln541. Residues Tyr551–Trp571 form a helical membrane-spanning segment. Residues Pro572–Arg574 lie on the Lumenal side of the membrane. A helical transmembrane segment spans residues Leu575 to Ile595. The Cytoplasmic segment spans residues Gly596–Arg608. Residues Trp609 to Val629 traverse the membrane as a helical segment. The Lumenal segment spans residues Arg630–Thr642. A helical membrane pass occupies residues Ala643 to Leu663. The Cytoplasmic portion of the chain corresponds to Gly664–Val802. An RING-type; atypical zinc finger spans residues Cys732–Arg796.

Component of the DSC E3 ubiquitin ligase complex composed of dscA, dscB, dscC and dscD.

It localises to the endoplasmic reticulum membrane. The enzyme catalyses S-ubiquitinyl-[E2 ubiquitin-conjugating enzyme]-L-cysteine + [acceptor protein]-L-lysine = [E2 ubiquitin-conjugating enzyme]-L-cysteine + N(6)-ubiquitinyl-[acceptor protein]-L-lysine.. Its pathway is protein modification; protein ubiquitination. Catalytic component of the DSC E3 ubiquitin ligase complex which is required for the srbA transcriptional activator proteolytic cleavage to release the soluble transcription factor from the membrane in low oxygen or sterol conditions. Required for growth during hypoxia and triazole drug susceptibility, as well as for virulence in a murine model of invasive pulmonary aspergillosis (IPA). In Aspergillus fumigatus (strain CBS 144.89 / FGSC A1163 / CEA10) (Neosartorya fumigata), this protein is DSC E3 ubiquitin ligase complex subunit A.